We begin with the raw amino-acid sequence, 494 residues long: Guanosine-5'-triphosphate,3'-diphosphate pyrophosphatase (494 aa).

The protein belongs to the GppA/Ppx family. GppA subfamily.

It catalyses the reaction guanosine 3'-diphosphate 5'-triphosphate + H2O = guanosine 3',5'-bis(diphosphate) + phosphate + H(+). The protein operates within purine metabolism; ppGpp biosynthesis; ppGpp from GTP: step 2/2. In terms of biological role, catalyzes the conversion of pppGpp to ppGpp. Guanosine pentaphosphate (pppGpp) is a cytoplasmic signaling molecule which together with ppGpp controls the 'stringent response', an adaptive process that allows bacteria to respond to amino acid starvation, resulting in the coordinated regulation of numerous cellular activities. The protein is Guanosine-5'-triphosphate,3'-diphosphate pyrophosphatase of Escherichia coli O6:H1 (strain CFT073 / ATCC 700928 / UPEC).